Consider the following 541-residue polypeptide: Presenilin homolog (541 aa).

2 stretches are compositionally biased toward polar residues: residues 1 to 14 (MAAVNLQASCSSGL) and 43 to 52 (NNYGSSNQDQ). 2 disordered regions span residues 1 to 52 (MAAV…NQDQ) and 69 to 92 (CGSRPSRLTGGGGGSGGPPTNEME). Residues 1–106 (MAAVNLQASC…LKYGAQHVIK (106 aa)) lie on the Cytoplasmic side of the membrane. A helical membrane pass occupies residues 107 to 127 (LFVPVSLCMLVVVATINSISF). At 128-154 (YNSTDVYLLYTPFHEQSPEPSVKFWSA) the chain is on the lumenal side. Asn129 carries N-linked (GlcNAc...) asparagine glycosylation. Residues 155 to 175 (LANSLILMSVVVVMTFLLIVL) form a helical membrane-spanning segment. At 176 to 182 (YKKRCYR) the chain is on the cytoplasmic side. A helical transmembrane segment spans residues 183 to 203 (IIHGWLILSSFMLLFIFTYLY). The Lumenal portion of the chain corresponds to 204–216 (LEELLRAYNIPMD). The helical transmembrane segment at 217 to 237 (YPTALLIMWNFGVVGMMSIHW) threads the bilayer. The Cytoplasmic segment spans residues 238 to 242 (QGPLR). The chain crosses the membrane as a helical span at residues 243–263 (LQQGYLIFVAALMALVFIKYL). Over 264–265 (PE) the chain is Lumenal. The chain crosses the membrane as a helical span at residues 266 to 286 (WTAWAVLAAISIWDLIAVLSP). Residue Asp279 is part of the active site. Residues 287-453 (RGPLRILVET…QNHPDGQEER (167 aa)) are Cytoplasmic-facing. Positions 320–481 (NTVTPQQSQA…ASSYGDWTTT (162 aa)) are interaction with Mettl2. Residues 327–350 (SQATASSSPSSSNSTTTTRATQNS) show a composition bias toward low complexity. 2 disordered regions span residues 327-379 (SQAT…DGSV) and 421-449 (EVQSTQSGNAQRSNEYRTVTAPDQNHPDG). Composition is skewed to polar residues over residues 361-370 (GQRTGNSHPR) and 421-443 (EVQSTQSGNAQRSNEYRTVTAPD). Residues 454–474 (GIKLGLGDFIFYSVLVGKASS) traverse the membrane as a helical segment. Residue Asp461 is part of the active site. Topologically, residues 475–481 (YGDWTTT) are lumenal. The chain crosses the membrane as a helical span at residues 482–502 (IACFVAILIGLCLTLLLLAIW). The Cytoplasmic portion of the chain corresponds to 503 to 506 (RKAL). The PAL signature appears at 507–509 (PAL). Residues 507–527 (PALPISITFGLIFCFATSAVV) constitute an intramembrane region (helical). The Cytoplasmic segment spans residues 528 to 541 (KPFMEDLSAKQVFI).

It belongs to the peptidase A22A family. As to quaternary structure, homodimer. Component of the gamma-secretase complex, a complex composed of a presenilin (Psn) homodimer, nicastrin (Nct), Aph-1 and Pen-2. Interacts with Mettl2. Isoform 2 shows a better interaction with Mettl2 than isoform 1. Cleaved. The cleavage, which probably takes place between the 6th and the 7th transmembrane regions, may be required for activation of the gamma-secretase activity. In terms of tissue distribution, maternally expressed in nurse and follicle cells. In early embryos, expressed in all or most cells and later increases in CNS and epidermal tissues. In larvae, expression is seen in all imaginal disks, brain and optic lobes. In pupae, expression is seen in eye disk and brain.

It is found in the endoplasmic reticulum membrane. Its subcellular location is the golgi apparatus membrane. Its function is as follows. Probable catalytic subunit of the gamma-secretase complex, an endoprotease complex that catalyzes the intramembrane cleavage of integral membrane proteins such as Notch receptor. Required for S3 cleavage of Notch, which releases activated Notch protein from the cell membrane. Involved in the patterning of the optic lobes. The protein is Presenilin homolog (Psn) of Drosophila melanogaster (Fruit fly).